We begin with the raw amino-acid sequence, 173 residues long: Large ribosomal subunit protein uL10 (173 aa).

The protein belongs to the universal ribosomal protein uL10 family. Part of the ribosomal stalk of the 50S ribosomal subunit. The N-terminus interacts with L11 and the large rRNA to form the base of the stalk. The C-terminus forms an elongated spine to which L12 dimers bind in a sequential fashion forming a multimeric L10(L12)X complex.

Forms part of the ribosomal stalk, playing a central role in the interaction of the ribosome with GTP-bound translation factors. The protein is Large ribosomal subunit protein uL10 of Thiobacillus denitrificans (strain ATCC 25259 / T1).